A 141-amino-acid polypeptide reads, in one-letter code: Holo-[acyl-carrier-protein] synthase (141 aa).

2 residues coordinate Mg(2+): Asp8 and Glu63.

Belongs to the P-Pant transferase superfamily. AcpS family. Mg(2+) serves as cofactor.

It localises to the cytoplasm. The catalysed reaction is apo-[ACP] + CoA = holo-[ACP] + adenosine 3',5'-bisphosphate + H(+). Transfers the 4'-phosphopantetheine moiety from coenzyme A to a Ser of acyl-carrier-protein. In Rhodospirillum centenum (strain ATCC 51521 / SW), this protein is Holo-[acyl-carrier-protein] synthase.